A 341-amino-acid polypeptide reads, in one-letter code: Tryptophan--tRNA ligase (341 aa).

Residues 11-13 (RPT) and 19-20 (GH) each bind ATP. Positions 12–20 (PTGKLHIGH) match the 'HIGH' region motif. Asp140 serves as a coordination point for L-tryptophan. Residues 152–154 (GTD), Leu194, and 202–206 (KMSKS) each bind ATP. The short motif at 202-206 (KMSKS) is the 'KMSKS' region element.

This sequence belongs to the class-I aminoacyl-tRNA synthetase family. In terms of assembly, homodimer.

The protein localises to the cytoplasm. The enzyme catalyses tRNA(Trp) + L-tryptophan + ATP = L-tryptophyl-tRNA(Trp) + AMP + diphosphate + H(+). Catalyzes the attachment of tryptophan to tRNA(Trp). This is Tryptophan--tRNA ligase from Streptococcus pneumoniae serotype 4 (strain ATCC BAA-334 / TIGR4).